We begin with the raw amino-acid sequence, 495 residues long: Sialin (495 aa).

Residues 1–24 (MKSPVSDLAPSDGEEGSDRTPLLQ) are disordered. Phosphoserine is present on Ser3. The Dileucine internalization motif motif lies at 22–23 (LL). A helical transmembrane segment spans residues 42-62 (LAFLSFFGFFVLYSLRVNLSV). Asn71, Asn77, and Asn95 each carry an N-linked (GlcNAc...) asparagine glycan. The next 11 membrane-spanning stretches (helical) occupy residues 110–130 (WILG…GYVA), 137–157 (LLLG…PLAA), 159–179 (FGVG…GVTY), 201–221 (ISYA…GVIC), 228–248 (YVFY…ICLV), 289–309 (LPLW…YTLL), 329–349 (FLSA…GQAA), 366–386 (VFSL…GFIG), 392–412 (AVAF…GFSI), 424–444 (ILLG…PIIA), and 458–478 (TVFC…TLFA).

Belongs to the major facilitator superfamily. Sodium/anion cotransporter family. As to expression, significantly expressed in lung endothelial cells, and much less in liver.

The protein resides in the basolateral cell membrane. It localises to the cytoplasmic vesicle. Its subcellular location is the secretory vesicle. It is found in the synaptic vesicle membrane. The protein localises to the lysosome membrane. It carries out the reaction N-acetylneuraminate(in) + H(+)(in) = N-acetylneuraminate(out) + H(+)(out). The enzyme catalyses D-glucuronate(out) + H(+)(out) = D-glucuronate(in) + H(+)(in). It catalyses the reaction 2 nitrate(out) + H(+)(out) = 2 nitrate(in) + H(+)(in). The catalysed reaction is L-aspartate(out) = L-aspartate(in). It carries out the reaction L-glutamate(out) = L-glutamate(in). The enzyme catalyses N-acetyl-L-aspartyl-L-glutamate(out) = N-acetyl-L-aspartyl-L-glutamate(in). Functionally, multifunctional anion transporter that operates via two distinct transport mechanisms, namely proton-coupled anion cotransport and membrane potential-dependent anion transport. Electroneutral proton-coupled acidic monosaccharide symporter, with a sugar to proton stoichiometry of 1:1. Exports glucuronic acid and free sialic acid derived from sialoglycoconjugate degradation out of lysosomes, driven by outwardly directed lysosomal pH gradient. May regulate lysosome function and metabolism of sialylated conjugates that impact oligodendrocyte lineage differentiation and myelinogenesis in the central nervous system. Electrogenic proton-coupled nitrate symporter that transports nitrate ions across the basolateral membrane of salivary gland acinar cells, with nitrate to proton stoichiometry of 2:1. May contribute to nitrate clearance from serum by salivary glands, where it is further concentrated and secreted in the saliva. Uses membrane potential to drive the uptake of acidic amino acids and peptides into synaptic vesicles. Responsible for synaptic vesicular storage of L-aspartate and L-glutamate in pinealocytes as well as vesicular uptake of N-acetyl-L-aspartyl-L-glutamate neuropeptide, relevant to aspartegic-associated glutamatergic neurotransmission and activation of metabotropic receptors that inhibit subsequent transmitter release. In terms of biological role, receptor for CM101, a polysaccharide produced by group B Streptococcus with antipathoangiogenic properties. In Ovis aries (Sheep), this protein is Sialin (SLC17A5).